The chain runs to 372 residues: 4-hydroxy-3-methylbut-2-en-1-yl diphosphate synthase (flavodoxin) (372 aa).

4 residues coordinate [4Fe-4S] cluster: Cys-270, Cys-273, Cys-305, and Glu-312.

Belongs to the IspG family. [4Fe-4S] cluster serves as cofactor.

The enzyme catalyses (2E)-4-hydroxy-3-methylbut-2-enyl diphosphate + oxidized [flavodoxin] + H2O + 2 H(+) = 2-C-methyl-D-erythritol 2,4-cyclic diphosphate + reduced [flavodoxin]. Its pathway is isoprenoid biosynthesis; isopentenyl diphosphate biosynthesis via DXP pathway; isopentenyl diphosphate from 1-deoxy-D-xylulose 5-phosphate: step 5/6. Converts 2C-methyl-D-erythritol 2,4-cyclodiphosphate (ME-2,4cPP) into 1-hydroxy-2-methyl-2-(E)-butenyl 4-diphosphate. The protein is 4-hydroxy-3-methylbut-2-en-1-yl diphosphate synthase (flavodoxin) of Cronobacter sakazakii (strain ATCC BAA-894) (Enterobacter sakazakii).